The primary structure comprises 91 residues: Small ribosomal subunit protein uS19 (91 aa).

Belongs to the universal ribosomal protein uS19 family.

Functionally, protein S19 forms a complex with S13 that binds strongly to the 16S ribosomal RNA. This chain is Small ribosomal subunit protein uS19, found in Metamycoplasma arthritidis (strain 158L3-1) (Mycoplasma arthritidis).